A 694-amino-acid polypeptide reads, in one-letter code: Voltage-gated chloride channel TMC4 (694 aa).

The interval 1–21 (MEAWGQSPACSSSRKARTGPS) is disordered. The Extracellular segment spans residues 1–150 (MEAWGQSPAC…GTESYFSLLR (150 aa)). Residues 151–171 (FLLFLNLVASVIEICMKLIPT) form a helical membrane-spanning segment. The Cytoplasmic portion of the chain corresponds to 172–231 (WLEGAPPGPPGPNISSPCGSYIPHTHGLVAFPTQLFNLLSGEGYLEWSPLFYGFYPPRSN). The chain crosses the membrane as a helical span at residues 232 to 252 (LAITYLCSVFAISVIYLLCIL). Residues 253-330 (RRSVSGLKET…SQRAKVWSMR (78 aa)) lie on the Extracellular side of the membrane. The chain crosses the membrane as a helical span at residues 331-351 (ALLNVLVLALLGAAFYGIYWA). At 352–376 (TEYTLTLQETPLVRQTPLFKLLVDY) the chain is on the cytoplasmic side. The chain crosses the membrane as a helical span at residues 377-397 (LPSIFISLFNFVLPPVFKFIA). Over 398–407 (SLEGYTQSRQ) the chain is Extracellular. The helical transmembrane segment at 408-428 (IVLILLRTVFLRLASLVFLLV) threads the bilayer. Residues 429 to 465 (SLWSQITCGGNMEAEGCKACGYNYKEIPCWETRLGQE) are Cytoplasmic-facing. A helical transmembrane segment spans residues 466 to 486 (MYKLVLFDLLMGLLVTLLVQF). The Extracellular portion of the chain corresponds to 487 to 513 (PRKILCGLCPGALGRLSGTLEFQVPDE). Residues 514-534 (VLGLIYAQTVVWVGSFFCPLL) traverse the membrane as a helical segment. Residue proline 535 is a topological domain, cytoplasmic. A helical transmembrane segment spans residues 536–556 (LINTAKFLILFCLKKITLFSI). The Extracellular segment spans residues 557–574 (YSPASRTFRASTANFFFP). The chain crosses the membrane as a helical span at residues 575–595 (LVLLVGLAISAVPVLYSIFLI). Residues 596-635 (PPSKLCGPFRGKLSIWAQIPEAIESLPQTAQNFLYFLGTQ) lie on the Cytoplasmic side of the membrane. A helical transmembrane segment spans residues 636-656 (AFTVPLLILSSILMMYTVALA). Over 657-694 (NCYGRLISELKRQIETEVQNKVFLAQRAVALSSRNGTS) the chain is Extracellular. An N-linked (GlcNAc...) asparagine glycan is attached at asparagine 691.

Belongs to the TMC family. Expressed in taste bud cells of the posterior tongue. Ubiquitously expressed.

Its subcellular location is the membrane. It catalyses the reaction chloride(in) = chloride(out). Functionally, voltage-gated chloride channel involved in high-concentration salt taste sensation. Depolarization induced by high NaCl concentration may trigger the activation of TMC4-mediated chloride influx into taste bud cells, helping the return to resting potential. Also allows permeation of organic anions including gluconate, but their current amplitudes at positive potentials are less than that of chloride. Involved in pH and temperature-dependent modulation of salty taste. The polypeptide is Voltage-gated chloride channel TMC4 (Mus musculus (Mouse)).